Here is a 1702-residue protein sequence, read N- to C-terminus: Dicer-like protein 4 (1702 aa).

Disordered stretches follow at residues 1-52 (MRDE…SAAT) and 89-120 (SSSS…EKDP). Over residues 17-31 (GKRDREQKNCEEEKN) the composition is skewed to basic and acidic residues. The segment covering 89–105 (SSSSVSSFSSSSSSLFS) has biased composition (low complexity). A Helicase ATP-binding domain is found at 131-307 (LCKKATEENV…SENLSKSINS (177 aa)). Residue 144 to 151 (LGTGCGKT) participates in ATP binding. Residues 251–254 (DECH) carry the DECH box motif. Residues 475–629 (QLIKILSVFR…RMNLEITYRS (155 aa)) enclose the Helicase C-terminal domain. Residues 656-748 (SISLLYKYCS…LPDSKDEIED (93 aa)) enclose the Dicer dsRNA-binding fold domain. One can recognise a PAZ domain in the interval 932–1054 (LVEDIFPPSG…IPPELSHLKI (123 aa)). RNase III domains are found at residues 1083-1251 (ELKH…VDSG) and 1292-1436 (LETL…LDCG). Residues Glu1330, Asp1422, and Glu1425 each contribute to the Mg(2+) site. DRBM domains are found at residues 1462–1528 (SPIK…NLKA) and 1621–1697 (TAKS…CLKH).

The protein belongs to the helicase family. Dicer subfamily. Interacts with DRB4. It depends on Mg(2+) as a cofactor. Mn(2+) serves as cofactor.

It is found in the nucleus. Functionally, ribonuclease (RNase) III involved in RNA-mediated post-transcriptional gene silencing (PTGS). Functions in the biogenesis of trans-acting small interfering RNAs (ta-siRNAs, derived from the TAS1, TAS2 or TAS3 endogenous transcripts) by cleaving small dsRNAs into 21-24 nucleotide ta-siRNAs. Functions with the dsRNA-binding protein DRB4 in ta-siRNAs processing. Acts in the RDR6/SGS3/DCL4/AGO7 ta-siRNA pathway involved in leaf developmental timing. Plays a role in transitive silencing of transgenes by processing secondary siRNAs. This pathway, which requires DCL2 and RDR6, amplifies silencing by using the target RNA as substrate to generate secondary siRNAs, providing an efficient mechanism for long-distance silencing. Required for the production of the 30-40 nucleotide bacterial-induced long siRNAs (lsiRNA). May participate with DCL3 in the production of 24 nucleotide repeat-associated siRNAs (ra-siRNAs) which derive from heterochromatin and DNA repeats such as transposons. Plays an important role in antiviral RNA silencing. Involved in the production of viral siRNAs derived from the cucumber mosaic virus (CMV), turnip crinkle virus (TCV) and tobacco rattle virus (TRV). Targeted by the viral silencing suppressor (VSR) protein 2b of the cucumber mosaic virus (CMV) that inactivates DCL4 function in RNA silencing. Does not seem to be involved in microRNAs (miRNAs) processing. This is Dicer-like protein 4 (DCL4) from Arabidopsis thaliana (Mouse-ear cress).